The chain runs to 2430 residues: Transcription factor HIVEP2 (2430 aa).

Residues 1–127 (MDTGDTALGQ…SLEGPPWLFP (127 aa)) form a disordered region. Composition is skewed to polar residues over residues 11-22 (KATSRSGETDSV) and 96-110 (HSLS…QGMT). 2 consecutive C2H2-type zinc fingers follow at residues 189–211 (YICP…IRSH) and 217–239 (YPCI…RKSH). Disordered stretches follow at residues 271–302 (IHSD…PPVP), 374–418 (SEKK…NTNA), and 744–995 (AHGH…SGKH). Positions 381–418 (SEPSLNLLSPHSKGSTDSGYFSRSESAEQQISPPNTNA) are enriched in polar residues. Composition is skewed to basic and acidic residues over residues 744-753 (AHGHSDRLDP) and 775-784 (DPDKMTDLGK). The span at 792-804 (SVIQHTNSLSRPN) shows a compositional bias: polar residues. Ser-811 bears the Phosphoserine mark. The span at 853-863 (SKPTPSQQVPQ) shows a compositional bias: polar residues. Residues 884-908 (RVTEEPDKPEKEKEAPTKEPEKPVE) are compositionally biased toward basic and acidic residues. The Nuclear localization signal signature appears at 929 to 935 (PKKKRLR). Ser-942, Ser-947, Ser-1040, Ser-1431, and Ser-1435 each carry phosphoserine. Residues 944–974 (GESSFESTGTGLSRSPSQESNLSHSSSFSMS) show a composition bias toward low complexity. The segment at 1472–1584 (KKGLSRPQKP…GGQQEEEGKA (113 aa)) is disordered. Composition is skewed to low complexity over residues 1499–1520 (SRSS…SASG) and 1560–1569 (SDMSMSPQSS). 2 consecutive C2H2-type zinc fingers follow at residues 1783 to 1805 (YICE…IRTH) and 1811 to 1835 (YVCK…SKAH). Disordered regions lie at residues 1848 to 1931 (SVDD…SSLP) and 1986 to 2117 (FQSK…SPRR). The segment covering 1850-1860 (DDTETEEAENM) has biased composition (acidic residues). Residues 1861 to 1871 (EELHKTSEKHS) are compositionally biased toward basic and acidic residues. Acidic residues predominate over residues 1883-1909 (DAEESDGEDGDDNDDDDEDDDDFDDQG). The segment covering 1991 to 2001 (TDSEPDKDRLD) has biased composition (basic and acidic residues). The segment covering 2013–2037 (SSEPSSSPRDFSPSSYRSSPGYDSS) has biased composition (low complexity). A run of 10 repeats spans residues 2037–2040 (SPCR), 2043–2046 (SPKR), 2055–2058 (SPRR), 2067–2070 (SPMR), 2073–2076 (SPRK), 2090–2093 (SPRR), 2096–2099 (SPRR), 2102–2105 (SPGK), 2114–2117 (SPRR), and 2129–2132 (SPRR). The tract at residues 2037-2132 (SPCRDNSPKR…TTIRAPSPRR (96 aa)) is 10 X 4 AA tandem repeats of S-P-[RGMKC]-[RK]. The segment covering 2062-2085 (PRRDLSPMRHLSPRKEAALRREMS) has biased composition (basic and acidic residues). The residue at position 2102 (Ser-2102) is a Phosphoserine. Over residues 2107 to 2116 (ITARRDLSPR) the composition is skewed to basic and acidic residues. Disordered regions lie at residues 2226-2252 (PALS…GAPG), 2268-2309 (KQAP…QEEN), and 2352-2430 (SIRH…NQLH). The span at 2271-2289 (PQVLQSSGLPSSPSSPRLL) shows a compositional bias: low complexity. 2 positions are modified to phosphoserine: Ser-2281 and Ser-2285. Over residues 2291 to 2301 (KQSTSEDSLNS) the composition is skewed to polar residues. The segment covering 2371 to 2380 (PDLHDGEKDT) has biased composition (basic and acidic residues). The segment covering 2406–2417 (FQSSKELSLSTE) has biased composition (polar residues). Phosphoserine is present on residues Ser-2413 and Ser-2415.

Interacts with TCF4. As to expression, expressed in heart, lung, skeletal muscle and liver. In the brain expressed in cerebral cortex, hippocampus, corpora amygdala and cerebellar cortex.

The protein localises to the nucleus. In terms of biological role, specifically binds to the DNA sequence 5'-GGGACTTTCC-3' which is found in the enhancer elements of numerous viral promoters such as those of SV40, CMV, or HIV1. In addition, related sequences are found in the enhancer elements of a number of cellular promoters, including those of the class I MHC, interleukin-2 receptor, somatostatin receptor II, and interferon-beta genes. It may act in T-cell activation. In Mus musculus (Mouse), this protein is Transcription factor HIVEP2 (Hivep2).